The following is an 89-amino-acid chain: Small ribosomal subunit protein uS17 (89 aa).

Belongs to the universal ribosomal protein uS17 family. As to quaternary structure, part of the 30S ribosomal subunit.

Functionally, one of the primary rRNA binding proteins, it binds specifically to the 5'-end of 16S ribosomal RNA. The chain is Small ribosomal subunit protein uS17 from Lactiplantibacillus plantarum (strain ATCC BAA-793 / NCIMB 8826 / WCFS1) (Lactobacillus plantarum).